Consider the following 137-residue polypeptide: Phosphoribosyl-AMP cyclohydrolase (137 aa).

D84 contributes to the Mg(2+) binding site. C85 is a binding site for Zn(2+). Residues D86 and D88 each contribute to the Mg(2+) site. Residues C101 and C108 each coordinate Zn(2+).

This sequence belongs to the PRA-CH family. As to quaternary structure, homodimer. Requires Mg(2+) as cofactor. Zn(2+) is required as a cofactor.

Its subcellular location is the cytoplasm. It carries out the reaction 1-(5-phospho-beta-D-ribosyl)-5'-AMP + H2O = 1-(5-phospho-beta-D-ribosyl)-5-[(5-phospho-beta-D-ribosylamino)methylideneamino]imidazole-4-carboxamide. Its pathway is amino-acid biosynthesis; L-histidine biosynthesis; L-histidine from 5-phospho-alpha-D-ribose 1-diphosphate: step 3/9. Catalyzes the hydrolysis of the adenine ring of phosphoribosyl-AMP. This Chlorobium limicola (strain DSM 245 / NBRC 103803 / 6330) protein is Phosphoribosyl-AMP cyclohydrolase.